The primary structure comprises 378 residues: uncharacterized protein (378 aa).

This is an uncharacterized protein from Orgyia pseudotsugata multicapsid polyhedrosis virus (OpMNPV).